The following is a 718-amino-acid chain: Calpastatin (718 aa).

Disordered stretches follow at residues 1-189 and 210-238; these read MNPA…MSST and EKKT…LSSD. A compositionally biased stretch (basic residues) spans 20-29; the sequence is PHSKKRHRRQ. 2 stretches are compositionally biased toward basic and acidic residues: residues 30 to 61 and 68 to 104; these read DAKT…EHTK and HASD…KPQD. Residue K32 forms a Glycyl lysine isopeptide (Lys-Gly) (interchain with G-Cter in SUMO2) linkage. Residue K49 is modified to N6-acetyllysine. S86 carries the phosphoserine modification. Residues 114–124 are compositionally biased toward low complexity; the sequence is AAGTTAAPGKA. Phosphoserine is present on residues S133, S222, and S243. Residues 170 to 222 form an Inhibitory domain 1 repeat; sequence TQEDSTAYTGPEISDPMSSTYIEELGKREVTIPPKYRELLEKKTGVAGPPPDS. Disordered stretches follow at residues 266-291 and 320-509; these read ESAK…AMSD and EAKR…QLPA. Position 290 is a blocked amino end (Ser); in form erythrocyte (S290). The Inhibitory domain 2 repeat unit spans residues 307 to 359; the sequence is EPELDLSSIKEVAEAKRKEEKVEKCGEDDETVPAEYRLKPATDKDGKPLLPEP. Composition is skewed to basic and acidic residues over residues 320 to 331, 342 to 377, and 384 to 399; these read EAKRKEEKVEKC, YRLK…ELSK, and SNEK…EESK. 3 positions are modified to phosphoserine: S367, S369, and S376. A compositionally biased stretch (low complexity) spans 400–411; sequence AAVPAPVAEAVP. The residue at position 444 (S444) is a Phosphoserine. The span at 446–496 shows a compositional bias: basic and acidic residues; that stretch reads GRKEADPEEGKPVADKIKEKSKEEEREKLGEKEETIPPDYRLEEAKDKDGK. One copy of the Inhibitory domain 3 repeat lies at 450–503; sequence ADPEEGKPVADKIKEKSKEEEREKLGEKEETIPPDYRLEEAKDKDGKPLLPSEP. Residues S520, S531, S579, and S581 each carry the phosphoserine modification. The interval 543-718 is disordered; that stretch reads VSEVVSQSPA…KPKANEKNAS (176 aa). Positions 566–579 are enriched in basic and acidic residues; the sequence is PSNKELDDALDKLS. Residues 587 to 640 form an Inhibitory domain 4 repeat; sequence PDPDENKPMEDKVKERAKKEHKDKLGERDDTIPPEYRHLLDQGEQDKPEKPPTK. Composition is skewed to basic and acidic residues over residues 587-650 and 706-718; these read PDPD…KPAG and ETSK…KNAS.

This sequence belongs to the protease inhibitor I27 (calpastatin) family.

Specific inhibition of calpain (calcium-dependent cysteine protease). Plays a key role in postmortem tenderization of meat and have been proposed to be involved in muscle protein degradation in living tissue. This Oryctolagus cuniculus (Rabbit) protein is Calpastatin (CAST).